The sequence spans 901 residues: Probable inorganic carbon transporter subunit DabA (901 aa).

4 residues coordinate Zn(2+): C424, D426, H606, and C621.

Belongs to the inorganic carbon transporter (TC 9.A.2) DabA family. As to quaternary structure, forms a complex with DabB. Zn(2+) is required as a cofactor.

Its subcellular location is the cell membrane. Part of an energy-coupled inorganic carbon pump. In Staphylococcus aureus (strain Mu3 / ATCC 700698), this protein is Probable inorganic carbon transporter subunit DabA.